Here is a 251-residue protein sequence, read N- to C-terminus: Probable ATP-dependent transporter ycf16 (251 aa).

Residues 8–250 (LEIKNLKACI…ELESKGYEWL (243 aa)) form the ABC transporter domain. Residue 40-47 (GPNGSGKS) coordinates ATP.

The protein belongs to the ABC transporter superfamily. Ycf16 family.

Its subcellular location is the plastid. The protein resides in the chloroplast. This is Probable ATP-dependent transporter ycf16 (ycf16) from Trieres chinensis (Marine centric diatom).